Consider the following 250-residue polypeptide: Acetylglutamate kinase (250 aa).

Substrate contacts are provided by residues 41-42 (GG), Arg-63, and Asn-156.

Belongs to the acetylglutamate kinase family. ArgB subfamily.

The protein resides in the cytoplasm. It carries out the reaction N-acetyl-L-glutamate + ATP = N-acetyl-L-glutamyl 5-phosphate + ADP. Its pathway is amino-acid biosynthesis; L-arginine biosynthesis; N(2)-acetyl-L-ornithine from L-glutamate: step 2/4. Functionally, catalyzes the ATP-dependent phosphorylation of N-acetyl-L-glutamate. This chain is Acetylglutamate kinase, found in Listeria monocytogenes serotype 4b (strain CLIP80459).